A 492-amino-acid polypeptide reads, in one-letter code: UPF0236 protein TTE0402 (492 aa).

It belongs to the UPF0236 family.

This Caldanaerobacter subterraneus subsp. tengcongensis (strain DSM 15242 / JCM 11007 / NBRC 100824 / MB4) (Thermoanaerobacter tengcongensis) protein is UPF0236 protein TTE0402.